Reading from the N-terminus, the 294-residue chain is C-type lectin domain family 4 member G (294 aa).

The Cytoplasmic portion of the chain corresponds to 1–30 (MNTGEYNKLGSAIEEVSRGQLGRWECYKQR). The chain crosses the membrane as a helical; Signal-anchor for type II membrane protein span at residues 31–51 (LFFLVLALLVATVLWALILST). At 52 to 294 (LLSSASSKLR…WICEKRSSCY (243 aa)) the chain is on the extracellular side. N73 carries an N-linked (GlcNAc...) asparagine glycan. The stretch at 100–151 (AQLQTTLAEFKDIQAKLMEQESILKELQERVTQDLAKASRDRENIRSELFQA) forms a coiled coil. N-linked (GlcNAc...) asparagine glycans are attached at residues N159, N246, and N256. Positions 172–287 (FQGSCYYFSE…CTNERDGWIC (116 aa)) constitute a C-type lectin domain. C264 and C278 are oxidised to a cystine.

Its subcellular location is the cell membrane. Its function is as follows. Binds mannose, N-acetylglucosamine (GlcNAc) and fucose, but not galactose, in a Ca(2+)-dependent manner. The polypeptide is C-type lectin domain family 4 member G (Clec4g) (Mus musculus (Mouse)).